Consider the following 897-residue polypeptide: Isoleucine--tRNA ligase (897 aa).

The 'HIGH' region signature appears at 59–69 (PYANGDIHVGH). Glu552 is an L-isoleucyl-5'-AMP binding site. Positions 593–597 (KMSKS) match the 'KMSKS' region motif. An ATP-binding site is contributed by Lys596. Zn(2+)-binding residues include Cys872, Cys875, Cys890, and Cys893.

Belongs to the class-I aminoacyl-tRNA synthetase family. IleS type 1 subfamily. Monomer. The cofactor is Zn(2+).

It localises to the cytoplasm. It carries out the reaction tRNA(Ile) + L-isoleucine + ATP = L-isoleucyl-tRNA(Ile) + AMP + diphosphate. Functionally, catalyzes the attachment of isoleucine to tRNA(Ile). As IleRS can inadvertently accommodate and process structurally similar amino acids such as valine, to avoid such errors it has two additional distinct tRNA(Ile)-dependent editing activities. One activity is designated as 'pretransfer' editing and involves the hydrolysis of activated Val-AMP. The other activity is designated 'posttransfer' editing and involves deacylation of mischarged Val-tRNA(Ile). The protein is Isoleucine--tRNA ligase of Mycoplasmoides gallisepticum (strain R(low / passage 15 / clone 2)) (Mycoplasma gallisepticum).